Consider the following 1024-residue polypeptide: Beta-galactosidase (1024 aa).

Residues Asn103 and Asp202 each contribute to the substrate site. Asp202 is a binding site for Na(+). Residues Glu417, His419, and Glu462 each coordinate Mg(2+). Substrate-binding positions include Glu462 and 538-541 (EYAH). The active-site Proton donor is Glu462. Catalysis depends on Glu538, which acts as the Nucleophile. Position 598 (Asn598) interacts with Mg(2+). Na(+) is bound by residues Phe602 and Asn605. Residues Asn605 and Trp1000 each coordinate substrate.

It belongs to the glycosyl hydrolase 2 family. As to quaternary structure, homotetramer. Mg(2+) is required as a cofactor. Requires Na(+) as cofactor.

It carries out the reaction Hydrolysis of terminal non-reducing beta-D-galactose residues in beta-D-galactosides.. The protein is Beta-galactosidase of Escherichia coli O127:H6 (strain E2348/69 / EPEC).